Here is a 121-residue protein sequence, read N- to C-terminus: Neuromedin-B (121 aa).

The N-terminal stretch at 1-24 (MTLRARGARLLGGLLFFTLLAAGA) is a signal peptide. A Methionine amide modification is found at Met-56. Residues 60–121 (SLEPPNPSLL…RRLLVQTLEK (62 aa)) constitute a propeptide that is removed on maturation.

This sequence belongs to the bombesin/neuromedin-B/ranatensin family. In terms of tissue distribution, higher expression in the central nervous system (CNS) than in peripheral tissues. Highest levels are found in the olfactory bulb. Relatively high levels in the CNS (including the cerebral cortex, cerebellum, spinal cord, medulla oblongata, midbrain, hypothalamus, hippocampus, and hypophysis) and in peripheral tissues such as the pancreas, adrenal gland, testis, ovary and cecum. Moderate levels are found in the rectum, heart and pons with low expression levels detected in the bone marrow and duodenum. Other tissues show no or low levels of expression.

It localises to the secreted. It is found in the cell projection. The protein localises to the neuron projection. Stimulates smooth muscle contraction. Induces sighing by acting directly on the pre-Botzinger complex, a cluster of several thousand neurons in the ventrolateral medulla responsible for inspiration during respiratory activity. Contributes to the induction of sneezing following exposure to chemical irritants or allergens which causes release of NMB by nasal sensory neurons and activation of NMBR-expressing neurons in the sneeze-evoking region of the brainstem. These in turn activate neurons of the caudal ventral respiratory group, giving rise to the sneezing response. Contributes to induction of acute itch, possibly through activation of the NMBR receptor on dorsal root ganglion neurons. Increases expression of NMBR and steroidogenic mediators STAR, CYP11A1 and HSD3B1 in Leydig cells, induces secretion of testosterone by Leydig cells and also promotes Leydig cell proliferation. Plays a role in the innate immune response to influenza A virus infection by enhancing interferon alpha expression and reducing expression of IL6. Plays a role in CSF1-induced proliferation of osteoclast precursors by contributing to positive regulation of the expression of the CSF1 receptor CSF1R. This Sus scrofa (Pig) protein is Neuromedin-B (NMB).